The chain runs to 959 residues: Probable LRR receptor-like serine/threonine-protein kinase At5g37450 (959 aa).

A signal peptide spans 1 to 24 (MKEMMGVVGIILVVSSCCLSLLDA). At 25 to 565 (QEITHPTDVS…SGMSIGVSVG (541 aa)) the chain is on the extracellular side. Residues asparagine 62, asparagine 88, asparagine 102, and asparagine 123 are each glycosylated (N-linked (GlcNAc...) asparagine). LRR repeat units follow at residues 79 to 100 (VKELRLLNMNLTGQLAPELGLL), 101 to 124 (SNLTILNFMWNDLTGQIPPELGNL), 125 to 148 (THLIFLLLSGNQLTGSLPQELGSL), 149 to 172 (SNLLILQIDYNEISGKLPTSLANL), 173 to 198 (KKLKHFHMNNNSITGQIPPEYSTLTN), 200 to 220 (LHFLMDNNKLTGNLPPELAQM), 221 to 244 (PSLRILQLDGSNFDGTEIPSSYGS), 246 to 268 (PNLVKLSLRNCNLEGPIPDLSKS), and 269 to 292 (LVLYYLDISSNKLTGEIPKNKFSA). Asparagine 182 carries an N-linked (GlcNAc...) asparagine glycan. 6 N-linked (GlcNAc...) asparagine glycosylation sites follow: asparagine 293, asparagine 311, asparagine 327, asparagine 358, asparagine 369, and asparagine 510. 3 LRR repeats span residues 294–314 (ITTINLYNNLLSGSIPSNFSG), 315–338 (LPRLQRLQVQNNNLSGEIPVIWEN), and 341–366 (LKAEEKLILDLRNNMFSNVSSVLLNP). A helical transmembrane segment spans residues 566–586 (IIIGAIAFFLVLSSLALVFFI). Residues 587-959 (KRSKRKRKTR…SGVIPSIAPR (373 aa)) lie on the Cytoplasmic side of the membrane. The Protein kinase domain occupies 631–906 (FSDLSQIGRG…RELENIYGLI (276 aa)). ATP contacts are provided by residues 637–645 (IGRGGYGKV) and lysine 659. Catalysis depends on aspartate 755, which acts as the Proton acceptor.

This sequence belongs to the protein kinase superfamily. Ser/Thr protein kinase family.

The protein localises to the membrane. It carries out the reaction L-seryl-[protein] + ATP = O-phospho-L-seryl-[protein] + ADP + H(+). It catalyses the reaction L-threonyl-[protein] + ATP = O-phospho-L-threonyl-[protein] + ADP + H(+). The polypeptide is Probable LRR receptor-like serine/threonine-protein kinase At5g37450 (Arabidopsis thaliana (Mouse-ear cress)).